The sequence spans 478 residues: Centromere DNA-binding protein complex CBF3 subunit C (478 aa).

Residues glutamate 206–threonine 251 are disordered. Polar residues predominate over residues glycine 217–isoleucine 230. Residues lysine 231–arginine 240 are compositionally biased toward basic residues.

In terms of assembly, component of the CBF3 copmplex, which is formed of CBF3A/CBF2, CBF3B/CEP3, CBF3C/CTF13 and CBF3D. CBF3C interacts with CBF3D and SGT1.

The protein resides in the nucleus. Its subcellular location is the chromosome. It localises to the centromere. Its function is as follows. Acts as a central component of the centromere DNA-binding protein complex CBF3, which is essential for chromosome segregation and movement of centromeres along microtubules. CBF3 is required for the recruitment of other kinetochore complexes to CEN DNA. It plays a role in the attachment of chromosomes to the spindle and binds selectively to a highly conserved DNA sequence called CDEIII, found in centromers and in several promoters. The association of CBF3C with CBF3D and SGT1 is required for CBF3C activation and CBF3 assembly. This chain is Centromere DNA-binding protein complex CBF3 subunit C (CTF13), found in Saccharomyces cerevisiae (strain ATCC 204508 / S288c) (Baker's yeast).